The chain runs to 776 residues: V-set and immunoglobulin domain-containing protein 10-like 2 (776 aa).

An N-terminal signal peptide occupies residues 1–28 (MVGLSAHHRPLGCRLLILFCLLHPGASG). 5 consecutive Ig-like domains span residues 32 to 140 (PTSN…LYLM), 150 to 234 (PRVQ…AFLD), 242 to 324 (PVIT…TTVQ), 399 to 498 (PTLA…LRLE), and 500 to 592 (PQLT…VLLE). 5 disulfides stabilise this stretch: cysteine 56–cysteine 122, cysteine 169–cysteine 217, cysteine 268–cysteine 308, cysteine 435–cysteine 480, and cysteine 521–cysteine 576. Residues 608–708 (TPPNVTISRL…EVKTPVDPAF (101 aa)) enclose the Fibronectin type-III domain. N-linked (GlcNAc...) asparagine glycosylation is found at asparagine 611 and asparagine 637. Residues 713 to 733 (AVLGAAGTGVVVALATSLLVF) form a helical membrane-spanning segment.

The protein resides in the membrane. This Mus musculus (Mouse) protein is V-set and immunoglobulin domain-containing protein 10-like 2.